A 448-amino-acid polypeptide reads, in one-letter code: Beta-glucosidase A (448 aa).

The active-site Proton donor is the Glu-166. The Nucleophile role is filled by Glu-352.

The protein belongs to the glycosyl hydrolase 1 family. Homooctamer.

The catalysed reaction is Hydrolysis of terminal, non-reducing beta-D-glucosyl residues with release of beta-D-glucose.. Functionally, bglA is intracellular and cleaves cellobiose probably through inorganic phosphate mediated hydrolysis. This chain is Beta-glucosidase A (bglA), found in Paenibacillus polymyxa (Bacillus polymyxa).